The sequence spans 339 residues: UDP-N-acetylglucosamine--N-acetylmuramyl-(pentapeptide) pyrophosphoryl-undecaprenol N-acetylglucosamine transferase (339 aa).

UDP-N-acetyl-alpha-D-glucosamine is bound by residues 11–13 (TGG), asparagine 127, arginine 170, serine 188, isoleucine 235, and glutamine 280.

The protein belongs to the glycosyltransferase 28 family. MurG subfamily.

Its subcellular location is the cell inner membrane. It carries out the reaction di-trans,octa-cis-undecaprenyl diphospho-N-acetyl-alpha-D-muramoyl-L-alanyl-D-glutamyl-meso-2,6-diaminopimeloyl-D-alanyl-D-alanine + UDP-N-acetyl-alpha-D-glucosamine = di-trans,octa-cis-undecaprenyl diphospho-[N-acetyl-alpha-D-glucosaminyl-(1-&gt;4)]-N-acetyl-alpha-D-muramoyl-L-alanyl-D-glutamyl-meso-2,6-diaminopimeloyl-D-alanyl-D-alanine + UDP + H(+). Its pathway is cell wall biogenesis; peptidoglycan biosynthesis. In terms of biological role, cell wall formation. Catalyzes the transfer of a GlcNAc subunit on undecaprenyl-pyrophosphoryl-MurNAc-pentapeptide (lipid intermediate I) to form undecaprenyl-pyrophosphoryl-MurNAc-(pentapeptide)GlcNAc (lipid intermediate II). The polypeptide is UDP-N-acetylglucosamine--N-acetylmuramyl-(pentapeptide) pyrophosphoryl-undecaprenol N-acetylglucosamine transferase (Thermotoga sp. (strain RQ2)).